A 691-amino-acid chain; its full sequence is Protein vreteno (691 aa).

The segment at 128 to 155 (QKEREITSDPVTSTEPMPTPGPAISATE) is disordered. Tudor domains lie at 366 to 427 (KLQS…LAGL) and 573 to 630 (APPI…FIFP).

In terms of assembly, interacts with aub and piwi. As to expression, gonad-specific.

The protein localises to the cytoplasm. It localises to the cytoplasmic ribonucleoprotein granule. Gonad-specific protein essential for germline development to repress transposable elements and preventing their mobilization, which is essential for the germline integrity. Acts via the piRNA metabolic process in both germline and somatic gonadal tissues by mediating the repression of transposable elements during meiosis. Required for primary piRNA biogenesis in both germline and somatic gonadal tissues. This Drosophila melanogaster (Fruit fly) protein is Protein vreteno (vret).